The chain runs to 612 residues: Alpha-glycerophosphate oxidase (612 aa).

Position 21-49 (21-49 (DLLIIGGGITGAGVALQAAASGLDTGLIE)) interacts with FAD. A compositionally biased stretch (basic and acidic residues) spans 399–408 (ETSTSEKELD). Residues 399–418 (ETSTSEKELDPSAVSRGSSF) are disordered.

Belongs to the FAD-dependent glycerol-3-phosphate dehydrogenase family. FAD serves as cofactor.

The protein localises to the cytoplasm. It carries out the reaction sn-glycerol 3-phosphate + O2 = dihydroxyacetone phosphate + H2O2. This Streptococcus pyogenes serotype M6 (strain ATCC BAA-946 / MGAS10394) protein is Alpha-glycerophosphate oxidase (glpO).